Here is a 420-residue protein sequence, read N- to C-terminus: MPLTPTPSTRPSRPTSFSMSGPTTLGVRLTSCSSSLRSSPSSSPDSPTSPTSSTTGSCPKTPPGTPPLPRTSRTARPSSCMMLSCITPQGRSLTSFSSVPSSRRSMPPLSFRLSRASRISRSIRNFTASVSRVLTLSMSRRATQPPTTRSRVRPSTGSRPPVSPLVTSSSPSPFSTLSARSIPSSSSVAALPSFRPKTSLPSAFRTPSPSPLLPPSTRTFVTGWSPARCTTRSSIMSEPSAPFGLPTPPASSGLRSASLSTAGSPLPPGTTFSTSRSRPPPFVPTPRIPFSSRPSLACPTGFAPTLGRSGAWLPPRPLSLPGPLPVPSAGSSPFTPTVSGCSASTSSAGGSGLVSHSMAPSQGSFGRPIQPAARQCSLPTQPLSAKSLLVWQTGVLPPPSGRVCSPRPLRRPGSPTQPWP.

2 stretches are compositionally biased toward low complexity: residues 1 to 18 (MPLTPTPSTRPSRPTSFS) and 30 to 59 (TSCSSSLRSSPSSSPDSPTSPTSSTTGSCP). 6 disordered regions span residues 1-77 (MPLT…TARP), 137-181 (SMSR…SARS), 195-219 (RPKTSLPSAFRTPSPSPLLPPSTRT), 235-281 (IMSE…RPPP), 327-370 (PSAG…RPIQ), and 396-420 (LPPPSGRVCSPRPLRRPGSPTQPWP). The span at 60 to 69 (KTPPGTPPLP) shows a compositional bias: pro residues. Residues 137-157 (SMSRRATQPPTTRSRVRPSTG) are compositionally biased toward polar residues. A compositionally biased stretch (low complexity) spans 158–181 (SRPPVSPLVTSSSPSPFSTLSARS). The segment covering 253–263 (GLRSASLSTAG) has biased composition (polar residues). Low complexity predominate over residues 327-348 (PSAGSSPFTPTVSGCSASTSSA).

In terms of biological role, cell-to-cell movement. This Maize rayado fino virus (isolate Costa Rica/Guapiles) (MRFV) protein is Putative movement protein.